A 624-amino-acid polypeptide reads, in one-letter code: UvrABC system protein C (624 aa).

The 79-residue stretch at 27-105 folds into the GIY-YIG domain; it reads LSPGVYRMLS…IKSLGPRYNI (79 aa). The UVR domain maps to 215–250; sequence RRVQHDLTARMESAAEAMEYEAAAVFRDRIRALTRI.

The protein belongs to the UvrC family. As to quaternary structure, interacts with UvrB in an incision complex.

It localises to the cytoplasm. Functionally, the UvrABC repair system catalyzes the recognition and processing of DNA lesions. UvrC both incises the 5' and 3' sides of the lesion. The N-terminal half is responsible for the 3' incision and the C-terminal half is responsible for the 5' incision. In Paramagnetospirillum magneticum (strain ATCC 700264 / AMB-1) (Magnetospirillum magneticum), this protein is UvrABC system protein C.